The primary structure comprises 217 residues: Probable transaldolase (217 aa).

Catalysis depends on lysine 83, which acts as the Schiff-base intermediate with substrate.

The protein belongs to the transaldolase family. Type 3B subfamily.

Its subcellular location is the cytoplasm. The enzyme catalyses D-sedoheptulose 7-phosphate + D-glyceraldehyde 3-phosphate = D-erythrose 4-phosphate + beta-D-fructose 6-phosphate. Its pathway is carbohydrate degradation; pentose phosphate pathway; D-glyceraldehyde 3-phosphate and beta-D-fructose 6-phosphate from D-ribose 5-phosphate and D-xylulose 5-phosphate (non-oxidative stage): step 2/3. Its function is as follows. Transaldolase is important for the balance of metabolites in the pentose-phosphate pathway. This chain is Probable transaldolase, found in Roseobacter denitrificans (strain ATCC 33942 / OCh 114) (Erythrobacter sp. (strain OCh 114)).